We begin with the raw amino-acid sequence, 283 residues long: Adenosyl-chloride synthase (283 aa).

Residues aspartate 11, 70–72, and 128–131 contribute to the substrate site; these read YVY and TWYG. Glycine 131 provides a ligand contact to chloride.

It belongs to the SAM hydrolase / SAM-dependent halogenase family. Homotrimer.

The catalysed reaction is chloride + S-adenosyl-L-methionine = 5'-chloro-5'-deoxyadenosine + L-methionine. In terms of biological role, involved in the biosynthesis of the proteosome inhibitor salinosporamide A (SalA). Catalyzes the halogenation of S-adenosyl-L-methionine (SAM) with chloride to generate 5'-chloro-5'-deoxyadenosine (5'-CIDA) and L-methionine. It can also use bromide and iodide, producing halogenated 5'-deoxyadenosine (5'-XDA) and L-methionine, however no halogenase activity is detected in the presence of fluoride. This chain is Adenosyl-chloride synthase, found in Salinispora tropica (strain ATCC BAA-916 / DSM 44818 / JCM 13857 / NBRC 105044 / CNB-440).